Reading from the N-terminus, the 213-residue chain is Small ribosomal subunit protein uS3 (213 aa).

Positions 38 to 106 (IRAFVKKLLY…EFSLEVNEIR (69 aa)) constitute a KH type-2 domain.

The protein belongs to the universal ribosomal protein uS3 family. In terms of assembly, part of the 30S ribosomal subunit. Forms a tight complex with proteins S10 and S14.

In terms of biological role, binds the lower part of the 30S subunit head. Binds mRNA in the 70S ribosome, positioning it for translation. The polypeptide is Small ribosomal subunit protein uS3 (Desulfovibrio desulfuricans (strain ATCC 27774 / DSM 6949 / MB)).